The following is an 839-amino-acid chain: V-type proton ATPase 116 kDa subunit a 1 (839 aa).

Topologically, residues 1 to 395 (MGELFRSEEM…DAYGIGTYRE (395 aa)) are cytoplasmic. Residues T257 and T367 each carry the phosphothreonine modification. Y371 carries the phosphotyrosine modification. A helical membrane pass occupies residues 396-414 (INPAPYTVITFPFLFAVMF). Topologically, residues 415–416 (GD) are vacuolar. A helical membrane pass occupies residues 417–433 (FGHGILMTLFAVWMVLR). Topologically, residues 434 to 448 (ESRILSQKHENEMFS) are cytoplasmic. Residues 449–478 (MVFSGRYIILLMGLFSIYTGLIYNDCFSKS) traverse the membrane as a helical segment. At 479–542 (LNIFGSSWSV…ATNKLTFLNS (64 aa)) the chain is on the vacuolar side. Residues 543-562 (FKMKMSVILGIIHMLFGVSL) traverse the membrane as a helical segment. Over 563–580 (SLFNHIYFKKPLNIYFGF) the chain is Cytoplasmic. Residues 581–601 (IPEIIFMSSLFGYLVILIFYK) form a helical membrane-spanning segment. At 602–646 (WTAYDAHSSRNAPSLLIHFINMFLFSYPESGNAMLYSGQKGIQCF) the chain is on the vacuolar side. A helical membrane pass occupies residues 647–666 (LIVVAMLCVPWMLLFKPLIL). Over 667-726 (RHQYLRKKHLGTLNFGGIRVGNGPTEEDAEIIQHDQLSTHSEDAEEFDFGDTMVHQAIHT) the chain is Cytoplasmic. The helical transmembrane segment at 727 to 751 (IEYCLGCISNTASYLRLWALSLAHA) threads the bilayer. At 752–772 (QLSEVLWTMVIHIGLHVRSLA) the chain is on the vacuolar side. A helical membrane pass occupies residues 773-811 (GGLGLFFIFAAFATLTVAILLIMEGLSAFLHALRLHWVE). Residues 812–839 (FQNKFYTGTGFKFLPFSFEHIREGKFDE) lie on the Cytoplasmic side of the membrane.

Belongs to the V-ATPase 116 kDa subunit family. As to quaternary structure, V-ATPase is a heteromultimeric enzyme made up of two complexes: the ATP-hydrolytic V1 complex and the proton translocation V0 complex. The V1 complex consists of three catalytic AB heterodimers that form a heterohexamer, three peripheral stalks each consisting of EG heterodimers, one central rotor including subunits D and F, and the regulatory subunits C and H. The proton translocation complex V0 consists of the proton transport subunit a, a ring of proteolipid subunits c9c'', rotary subunit d, subunits e and f, and the accessory subunits ATP6AP1/Ac45 and ATP6AP2/PRR. Interacts with SPAAR. Predominantly expressed in neurons in the cortex and in the dentate gyrus, CA1 and CA3 regions of the hippocampus (at protein level). Expressed at lower levels in astrocytes, oligodendrocytes and microglia (at protein level). In the cerebellum, present in Purkinje and granule cells (at protein level).

It localises to the cytoplasmic vesicle. The protein localises to the clathrin-coated vesicle membrane. The protein resides in the secretory vesicle. It is found in the synaptic vesicle membrane. Its subcellular location is the melanosome. Subunit of the V0 complex of vacuolar(H+)-ATPase (V-ATPase), a multisubunit enzyme composed of a peripheral complex (V1) that hydrolyzes ATP and a membrane integral complex (V0) that translocates protons. V-ATPase is responsible for the acidification of various organelles, such as lysosomes, endosomes, the trans-Golgi network, and secretory granules, including synaptic vesicles. In certain cell types, can be exported to the plasma membrane, where it is involved in the acidification of the extracellular environment. Required for assembly and activity of the vacuolar ATPase. Through its action on compartment acidification, plays an essential role in neuronal development in terms of integrity and connectivity of neurons. The polypeptide is V-type proton ATPase 116 kDa subunit a 1 (Atp6v0a1) (Mus musculus (Mouse)).